The chain runs to 465 residues: Ribulose bisphosphate carboxylase large chain (465 aa).

K4 carries the post-translational modification N6,N6,N6-trimethyllysine. Residues N113 and T163 each coordinate substrate. Residue K165 is the Proton acceptor of the active site. A substrate-binding site is contributed by K167. K191, D193, and E194 together coordinate Mg(2+). K191 carries the N6-carboxylysine modification. H284 serves as the catalytic Proton acceptor. Positions 285, 317, and 369 each coordinate substrate.

It belongs to the RuBisCO large chain family. Type I subfamily. Heterohexadecamer of 8 large chains and 8 small chains; disulfide-linked. The disulfide link is formed within the large subunit homodimers. It depends on Mg(2+) as a cofactor. The disulfide bond which can form in the large chain dimeric partners within the hexadecamer appears to be associated with oxidative stress and protein turnover.

It localises to the plastid. The protein localises to the chloroplast. It catalyses the reaction 2 (2R)-3-phosphoglycerate + 2 H(+) = D-ribulose 1,5-bisphosphate + CO2 + H2O. The enzyme catalyses D-ribulose 1,5-bisphosphate + O2 = 2-phosphoglycolate + (2R)-3-phosphoglycerate + 2 H(+). Its function is as follows. RuBisCO catalyzes two reactions: the carboxylation of D-ribulose 1,5-bisphosphate, the primary event in carbon dioxide fixation, as well as the oxidative fragmentation of the pentose substrate in the photorespiration process. Both reactions occur simultaneously and in competition at the same active site. This chain is Ribulose bisphosphate carboxylase large chain, found in Morella cerifera (Wax myrtle).